The primary structure comprises 315 residues: Methionyl-tRNA formyltransferase (315 aa).

Residue 113–116 participates in (6S)-5,6,7,8-tetrahydrofolate binding; it reads SLLP.

It belongs to the Fmt family.

The catalysed reaction is L-methionyl-tRNA(fMet) + (6R)-10-formyltetrahydrofolate = N-formyl-L-methionyl-tRNA(fMet) + (6S)-5,6,7,8-tetrahydrofolate + H(+). Functionally, attaches a formyl group to the free amino group of methionyl-tRNA(fMet). The formyl group appears to play a dual role in the initiator identity of N-formylmethionyl-tRNA by promoting its recognition by IF2 and preventing the misappropriation of this tRNA by the elongation apparatus. This Shigella dysenteriae serotype 1 (strain Sd197) protein is Methionyl-tRNA formyltransferase.